Reading from the N-terminus, the 787-residue chain is MQFSYSWLKTQADTELSSDKLEHLLTMSGLEVEEAETAAPAFAGVVIAEVKSVEKHPDADRLNVTRVDAGTGGLVQIVCGAPNVKAGIKVPCSLPGAVLPGNFKIKPTKMRGEVSDGMLCSTDELGLPDDGVNGLHILPEDAPVGTNIREYLDLDDTLFTLKITPNRADCLSIKGIAREVSALTGCAFRQPEIHTAPITGSRKQPVQINAPADCGRFISRVIENVNARATTPDWMKQRLERSGIRSISALVDIGNYVMLEIGQPMHVFDADKLSGSLHIRRAREGETLECLNEKTVSLSENTLVVADEKGVLSLAGLMGGAASAVSDGTQNIVLEAAWFAPEIIAGKSRQYGFGSDSSFRFERGVDYRLQADAIERATELVLQICGGAAGEMVEAQGELPEAKQVGLRLDRLKTVLGVDIPAEQVETILQHLGLQPEKTAEGFRVTAPSFRFDIEIEADLIEEIGRVYGYENIPDDYTSGRLKMLELPETRRPRFAVYNEMAARGYREVVSYAFVDEQWEQDFAANADPIRLQNPLAAQYAVMRSTLIGGLVEILQNNLNRKQNRVCVFEIARVFSKGSDGQFVQNERIGGLWYGAVMPEQWGGKTRNADFYDIKADVENLLKNKAVEFVKTGHPALHPGRAANIVSDGKVIGFVGELHPKWLQKYDLPQAPLVFEIDMAAVLECGKTRYRVVSKFQPVRRDLAFVMPEAMSHDDLLLVLKGAANKLVQEISVFDVYRGTGLPEGMKSVAVKVILQDMENTLTDEAVEPLIGKLIGAATAAGARLRS.

The region spanning 39 to 149 (APAFAGVVIA…EDAPVGTNIR (111 aa)) is the tRNA-binding domain. In terms of domain architecture, B5 spans 400–475 (PEAKQVGLRL…RVYGYENIPD (76 aa)). D453, D459, E462, and E463 together coordinate Mg(2+). The FDX-ACB domain maps to 694–786 (SKFQPVRRDL…AATAAGARLR (93 aa)).

Belongs to the phenylalanyl-tRNA synthetase beta subunit family. Type 1 subfamily. As to quaternary structure, tetramer of two alpha and two beta subunits. It depends on Mg(2+) as a cofactor.

It is found in the cytoplasm. The catalysed reaction is tRNA(Phe) + L-phenylalanine + ATP = L-phenylalanyl-tRNA(Phe) + AMP + diphosphate + H(+). The polypeptide is Phenylalanine--tRNA ligase beta subunit (pheT) (Neisseria meningitidis serogroup B (strain ATCC BAA-335 / MC58)).